Consider the following 275-residue polypeptide: Glutamate racemase (275 aa).

Substrate is bound by residues 22–23 (DS) and 54–55 (YG). Cys85 functions as the Proton donor/acceptor in the catalytic mechanism. 86 to 87 (NT) provides a ligand contact to substrate. Cys196 functions as the Proton donor/acceptor in the catalytic mechanism. 197-198 (TH) is a binding site for substrate.

This sequence belongs to the aspartate/glutamate racemases family.

It catalyses the reaction L-glutamate = D-glutamate. The protein operates within cell wall biogenesis; peptidoglycan biosynthesis. In terms of biological role, provides the (R)-glutamate required for cell wall biosynthesis. This Pseudomonas syringae pv. tomato (strain ATCC BAA-871 / DC3000) protein is Glutamate racemase.